The following is a 1203-amino-acid chain: Delphilin (1203 aa).

In terms of domain architecture, PDZ 1 spans 1–79; sequence MPATNQGWPE…VPPSLGVLPG (79 aa). The S-palmitoyl cysteine moiety is linked to residue alanine 3. Residues 215–270 are disordered; sequence GAQRLRRSRSEERPERLLVSTRASAAPRRPDEPPPRKATSLLGGRTGPGGPRRTVR. Residues 231–241 show a composition bias toward low complexity; it reads LLVSTRASAAP. The region spanning 268 to 345 is the PDZ 2 domain; the sequence is TVRVYKGNKS…MPTLVVEEGP (78 aa). Position 303 is a phosphoserine (serine 303). 4 disordered regions span residues 466 to 541, 563 to 586, 611 to 656, and 710 to 821; these read ESSL…TPNP, IGTM…GPRT, LASP…PPSR, and SFVT…SHMS. Residues 500–509 are compositionally biased toward polar residues; the sequence is RSQGLETSLS. Phosphoserine is present on residues serine 572, serine 613, serine 644, and serine 647. Residues 611–625 show a composition bias toward low complexity; that stretch reads LASPSSSESHPYASL. The span at 715 to 740 shows a compositional bias: low complexity; sequence ERSSASECVSSSEEGSSLTYSSISDH. Residues 741–756 show a composition bias toward pro residues; that stretch reads IPPPPLSPPPPPPLPF. The span at 774–784 shows a compositional bias: polar residues; sequence QSLTKPLTQIN. A compositionally biased stretch (pro residues) spans 786-803; that stretch reads PVPPPPPPPLPPPVPCAP. The FH2 domain occupies 812–1203; that stretch reads HRRSETSHMS…SSGMVSPLAW (392 aa).

As to quaternary structure, interacts with C-terminus of the glutamate receptor GRID2 via PDZ domain. Isoform 2 also interacts with Profilin-2/PFN2 and with the monocarboxylate transporter SLC16A7 via PDZ domain. The interaction of isoform 2 with GRID2 is dependent on GRID2 phosphorylation by PKA. Isoform 2 is palmitoylated. Palmitoylation of isoform 2 is necessary for the enhanced cell surface expression of GRID2, and is also responsible for the accumulation of isoform 2 within dendritic spines. Isoform 1 and isoform 2 are differentially localized, probably modulating GRID2 signaling in neurons. As to expression, isoform 1 is expressed in the cerebellum, but not in the cerebral cortex. Isoform 2 is expressed in the cell body of purkinge cells of the cerebellum and weakly expressed in the cerebrum and the brainstem as well as various nuclei of the thalamus. Isoform 2 is highly expressed in the cerebral cortex than in the cerebellum. Isoform 3 is expressed in the cerebellum and cerebrum.

It is found in the postsynaptic cell membrane. The protein localises to the cell projection. Its subcellular location is the dendritic spine. It localises to the synapse. The protein resides in the cell membrane. Functionally, postsynaptic scaffolding protein at the Purkinje cell synapse, where it may serve to link GRID2 with actin cytoskeleton and various signaling molecules. In Mus musculus (Mouse), this protein is Delphilin (Grid2ip).